A 147-amino-acid polypeptide reads, in one-letter code: Two-component response regulator ORR11 (147 aa).

In terms of domain architecture, Response regulatory spans 29–146 (HVLAVDDSSV…DVSRLFSRVL (118 aa)). D79 carries the 4-aspartylphosphate modification.

This sequence belongs to the ARR family. Type-A subfamily. Two-component system major event consists of a His-to-Asp phosphorelay between a sensor histidine kinase (HK) and a response regulator (RR). In plants, the His-to-Asp phosphorelay involves an additional intermediate named Histidine-containing phosphotransfer protein (HPt). This multistep phosphorelay consists of a His-Asp-His-Asp sequential transfer of a phosphate group between first a His and an Asp of the HK protein, followed by the transfer to a conserved His of the HPt protein and finally the transfer to an Asp in the receiver domain of the RR protein.

Its function is as follows. Functions as a response regulator involved in His-to-Asp phosphorelay signal transduction system. Phosphorylation of the Asp residue in the receiver domain activates the ability of the protein to promote the transcription of target genes. Type-A response regulators seem to act as negative regulators of the cytokinin signaling. The sequence is that of Two-component response regulator ORR11 from Oryza sativa subsp. indica (Rice).